A 262-amino-acid chain; its full sequence is Transmembrane and immunoglobulin domain-containing protein 1 (262 aa).

A signal peptide spans 1-29 (MAWKSSVIMQMGRFLLLVILFLPREMTSS). One can recognise an Ig-like C2-type 1 domain in the interval 30–114 (VLTVNGKTEN…LGRDQSVSVS (85 aa)). Residues 30–220 (VLTVNGKTEN…IVKDKTVGVP (191 aa)) lie on the Extracellular side of the membrane. A disulfide bridge links C54 with C103. Residues N58, N83, N118, N158, and N190 are each glycosylated (N-linked (GlcNAc...) asparagine). An Ig-like C2-type 2 domain is found at 122–207 (PPLLSGNDFQ…KSSLKTESLD (86 aa)). A disulfide bond links C143 and C195. The helical transmembrane segment at 221-241 (IEPIIAACVVIFLTLCFGLIA) threads the bilayer. The Cytoplasmic segment spans residues 242 to 262 (RRKKIMKLCMKDKDPHSETAL).

As to quaternary structure, homodimer. Post-translationally, N-glycosylated.

Its subcellular location is the cell membrane. The protein localises to the cytoplasm. In terms of biological role, may control cell-cell adhesion, cell migration and proliferation, cell morphology, and protects renal epithelial cells from oxidative cell injury to promote cell survival. This Homo sapiens (Human) protein is Transmembrane and immunoglobulin domain-containing protein 1.